Consider the following 347-residue polypeptide: Biotin synthase (347 aa).

The Radical SAM core domain occupies 40-258 (AQVQVSTLLS…IAVARIVMPR (219 aa)). Residues Cys55, Cys59, and Cys62 each coordinate [4Fe-4S] cluster. Positions 99, 130, 190, and 262 each coordinate [2Fe-2S] cluster.

It belongs to the radical SAM superfamily. Biotin synthase family. As to quaternary structure, homodimer. It depends on [4Fe-4S] cluster as a cofactor. The cofactor is [2Fe-2S] cluster.

The enzyme catalyses (4R,5S)-dethiobiotin + (sulfur carrier)-SH + 2 reduced [2Fe-2S]-[ferredoxin] + 2 S-adenosyl-L-methionine = (sulfur carrier)-H + biotin + 2 5'-deoxyadenosine + 2 L-methionine + 2 oxidized [2Fe-2S]-[ferredoxin]. Its pathway is cofactor biosynthesis; biotin biosynthesis; biotin from 7,8-diaminononanoate: step 2/2. Its function is as follows. Catalyzes the conversion of dethiobiotin (DTB) to biotin by the insertion of a sulfur atom into dethiobiotin via a radical-based mechanism. The protein is Biotin synthase of Stenotrophomonas maltophilia (strain R551-3).